A 146-amino-acid chain; its full sequence is NADH-ubiquinone oxidoreductase chain 6 (146 aa).

4 helical membrane passes run 10–30, 41–61, 75–95, and 124–144; these read LTAIGMLTPVQSMTCLMILFV, FVLMGMLYVTMYVGAMAMLFL, GTITPLMVTLLAMCLMPLDIT, and AMLLMLTGMMLMLSVMGAMSI.

This sequence belongs to the complex I subunit 6 family.

It localises to the mitochondrion membrane. The catalysed reaction is a ubiquinone + NADH + 5 H(+)(in) = a ubiquinol + NAD(+) + 4 H(+)(out). Functionally, core subunit of the mitochondrial membrane respiratory chain NADH dehydrogenase (Complex I) that is believed to belong to the minimal assembly required for catalysis. Complex I functions in the transfer of electrons from NADH to the respiratory chain. The immediate electron acceptor for the enzyme is believed to be ubiquinone. The sequence is that of NADH-ubiquinone oxidoreductase chain 6 (ND6) from Debaryomyces hansenii (strain ATCC 36239 / CBS 767 / BCRC 21394 / JCM 1990 / NBRC 0083 / IGC 2968) (Yeast).